A 525-amino-acid chain; its full sequence is Glutamyl-tRNA(Gln) amidotransferase subunit A, mitochondrial (525 aa).

Residues Lys76 and Ser168 each act as charge relay system in the active site. The Acyl-ester intermediate role is filled by Ser192.

The protein belongs to the amidase family. GatA subfamily. Subunit of the heterotrimeric GatCAB amidotransferase (AdT) complex, composed of A (QRSL1), B (GATB) and C (GATC) subunits.

It is found in the mitochondrion. The catalysed reaction is L-glutamyl-tRNA(Gln) + L-glutamine + ATP + H2O = L-glutaminyl-tRNA(Gln) + L-glutamate + ADP + phosphate + H(+). Allows the formation of correctly charged Gln-tRNA(Gln) through the transamidation of misacylated Glu-tRNA(Gln) in the mitochondria. The reaction takes place in the presence of glutamine and ATP through an activated gamma-phospho-Glu-tRNA(Gln). The sequence is that of Glutamyl-tRNA(Gln) amidotransferase subunit A, mitochondrial (Qrsl1) from Rattus norvegicus (Rat).